Consider the following 159-residue polypeptide: Phosphopantetheine adenylyltransferase (159 aa).

Threonine 9 is a binding site for substrate. ATP contacts are provided by residues 9 to 10 and histidine 17; that span reads TF. 3 residues coordinate substrate: lysine 41, leucine 73, and arginine 87. ATP is bound by residues 88 to 90, glutamate 98, and 123 to 129; these read GLR and YSFISST.

The protein belongs to the bacterial CoaD family. Homohexamer. Requires Mg(2+) as cofactor.

It is found in the cytoplasm. It catalyses the reaction (R)-4'-phosphopantetheine + ATP + H(+) = 3'-dephospho-CoA + diphosphate. The protein operates within cofactor biosynthesis; coenzyme A biosynthesis; CoA from (R)-pantothenate: step 4/5. Functionally, reversibly transfers an adenylyl group from ATP to 4'-phosphopantetheine, yielding dephospho-CoA (dPCoA) and pyrophosphate. The polypeptide is Phosphopantetheine adenylyltransferase (Pseudomonas fluorescens (strain ATCC BAA-477 / NRRL B-23932 / Pf-5)).